Consider the following 546-residue polypeptide: Nicotinic acid-CoA ligase olcI (546 aa).

Position 194-205 (194-205 (MFSTSGTSGLPK)) interacts with AMP. Residues 445-523 (EIEAVLLKDP…ESLPRTGIGK (79 aa)) form an AMP-binding region.

It belongs to the ATP-dependent AMP-binding enzyme family.

It carries out the reaction nicotinate + ATP + CoA = nicotinyl-CoA + AMP + diphosphate. Its pathway is secondary metabolite biosynthesis; terpenoid biosynthesis. In terms of biological role, nicotinic acid-CoA ligase; part of the gene cluster that mediates the biosynthesis of 15-deoxyoxalicine B. The first step of the pathway is the synthesis of nicotinyl-CoA from nicotinic acid by the nicotinic acid-CoA ligase olcI. Nicotinyl-CoA is then a substrate of polyketide synthase olcA to produce 4-hydroxy-6-(3-pyridinyl)-2H-pyran-2-one (HPPO) which is further prenylated by the polyprenyl transferase olcH to yield geranylgeranyl-HPPO. Geranylgeranyl pyrophosphate is provided by the cluster-specific geranylgeranyl pyrophosphate synthase olcC. The FAD-dependent monooxygenase olcE catalyzes the epoxidation of geranylgeranyl-HPPO and the terpene cyclase olcD catalyzes the cyclization of the terpenoid component, resulting in the formation of the tricyclic terpene moiety seen in predecaturin E. The cytochrome P450 monooxygenase then catalyzes the allylic oxidation of predecaturin E, which is followed by spirocylization with concomitant loss of one molecule of water to form decaturin E. Decaturin E is the substrate of the cytochrome P450 monooxygenase olcJ which hydroxylates it at the C-29 position to form decaturin F. The short-chain dehydrogenase/reductase olcF may catalyze the oxidation of decaturin F to generate the 29-hydroxyl-27-one intermediate, and subsequent hemiacetal formation probably leads to the formation of decaturin C. The dioxygenase olcK may be a peroxisomal enzyme that catalyzes the hydroxylation of decaturin C into decaturin A once decaturin C is shuttled into the peroxisome by the MFS transporter olcL. Finally the cytochrome P450 monooxygenase olcB catalyzes the oxidative rearrangement to yield 15-deoxyoxalicine B. In the absence of olcJ, decaturin E may be shunted to a pathway in which it is oxidized to a ketone, possibly by olcF, to form decaturin D, which undergoes further allylic oxidation to yield decaturin G. Moreover, in the absence of oclK or oclL, oclB can convert decaturin C into 15-deoxyoxalicine A. The polypeptide is Nicotinic acid-CoA ligase olcI (Penicillium canescens).